The primary structure comprises 765 residues: Endosialin (765 aa).

A signal peptide spans 1–17 (MLLRLLLAWVAAVPALG). Residues 18–695 (QVPWTPEPRA…GQSQRDDRWL (678 aa)) are Extracellular-facing. Residues 30 to 156 (GPSSCYALFP…CTLAVDGYLC (127 aa)) enclose the C-type lectin domain. Cystine bridges form between Cys-131/Cys-147, Cys-164/Cys-213, Cys-203/Cys-230, Cys-316/Cys-326, Cys-322/Cys-335, and Cys-337/Cys-350. The Sushi domain maps to 162 to 232 (GACPALPLEV…WSQTGPLCPG (71 aa)). The EGF-like; calcium-binding domain maps to 312-351 (DTDECQIAGVCQQMCVNYVGGFECYCSEGHELEADGISCS). Thr-401, Thr-428, Thr-448, Thr-456, Thr-459, and Thr-466 each carry an O-linked (GalNAc...) threonine glycan. O-linked (GalNAc...) serine glycosylation is found at Ser-467 and Ser-470. O-linked (GalNAc...) threonine glycosylation occurs at Thr-472. Ser-477 is a glycosylation site (O-linked (GalNAc...) serine). O-linked (GalNAc...) threonine glycans are attached at residues Thr-488, Thr-517, Thr-520, Thr-535, Thr-552, Thr-554, Thr-556, Thr-570, Thr-571, Thr-604, and Thr-613. Residues 548–675 (MSPDTHTITY…QLPSVPSTAA (128 aa)) are disordered. A compositionally biased stretch (pro residues) spans 622–633 (PAFPSSPLPPQR). O-linked (GalNAc...) serine glycosylation is found at Ser-626 and Ser-627. Thr-635 and Thr-638 each carry an O-linked (GalNAc...) threonine glycan. Polar residues predominate over residues 635-647 (TNQTSSISPTHSY). O-linked (GalNAc...) serine glycans are attached at residues Ser-639 and Ser-640. Thr-644 carries O-linked (GalNAc...) threonine glycosylation. Ser-663 is a glycosylation site (O-linked (GalNAc...) serine). The O-linked (GalNAc...) threonine glycan is linked to Thr-673. A helical membrane pass occupies residues 696-716 (LVALLVPTCVFLVVLLALGIV). Residues 717-765 (YCTRCGSHAPNKRITDCYRWVTHAGNKSSTEPMPPRGSLTGVQTCRTSV) lie on the Cytoplasmic side of the membrane. Ser-754 is modified (phosphoserine).

Interacts with PDGFRA; this interaction promotes PDGF receptor signaling pathway. Interacts with integrin beta-1/ITGB1. Interacts with insulin receptor/INSR; this interaction diminishes INSR autophosphorylation. Post-translationally, O-glycosylated by sialylated oligosaccharides. In terms of processing, may be N-glycosylated. Expressed in cell lines derived from endothelial cells, embryonic fibroblasts and preadipocytes. Expressed in skeletal muscle by a subset of pericytes.

It localises to the membrane. Functionally, cell surface glycoprotein involved in various biological processes including angiogenesis, immune response modulation, and tissue remodeling and repair. Participates in pericyte proliferation through positive modulation of the PDGF receptor signaling pathway. Acts as a scaffold for factor X, triggering allosteric changes and the spatial re-alignment of factor X with the TF-factor VIIa complex, thereby enhancing coagulation activation. Modulates the insulin signaling pathway by interacting with insulin receptor/INSR and by diminishing its capacity to be autophosphorylated in response to insulin. Also regulates LPS-induced inflammatory responses in macrophages by favoring production of proinflammatory cytokines. This chain is Endosialin (Cd248), found in Mus musculus (Mouse).